Here is a 334-residue protein sequence, read N- to C-terminus: Ribonucleoside-diphosphate reductase small chain (334 aa).

3 residues coordinate Fe cation: aspartate 77, glutamate 108, and histidine 111. Residue tyrosine 115 is part of the active site. Positions 171, 205, and 208 each coordinate Fe cation.

This sequence belongs to the ribonucleoside diphosphate reductase small chain family. As to quaternary structure, heterotetramer composed of a homodimer of the large subunit (R1) and a homodimer of the small subunit (R2). Larger multisubunit protein complex are also active, composed of (R1)n(R2)n. Requires Fe cation as cofactor.

The enzyme catalyses a 2'-deoxyribonucleoside 5'-diphosphate + [thioredoxin]-disulfide + H2O = a ribonucleoside 5'-diphosphate + [thioredoxin]-dithiol. Ribonucleoside-diphosphate reductase holoenzyme provides the precursors necessary for viral DNA synthesis. Allows virus growth in non-dividing cells. Catalyzes the biosynthesis of deoxyribonucleotides from the corresponding ribonucleotides. The protein is Ribonucleoside-diphosphate reductase small chain of Ornithodoros (relapsing fever ticks).